The chain runs to 125 residues: Diol dehydratase-reactivating factor small subunit (125 aa).

E31 contacts Mg(2+).

The protein belongs to the DdrB/PduH family. In terms of assembly, component of the DDR complex, a heterotetramer of DdrA(2)/DdrB(2). The DDR complex interacts with the diol dehydratase complex in the presence of ADP but not ATP. It depends on Mg(2+) as a cofactor.

The catalysed reaction is ATP + H2O = ADP + phosphate + H(+). Functionally, small subunit of the diol dehydratase-reactivating factor (DDR), which reactivates suicidally inhibited adenosylcobalamin-dependent diol dehydratase (DD, pddA, pddB, pddC). DDR acts as a chaperone, reactivates inactivated DD holoenzyme in the presence of ATP, Mg(2+) and free adenosylcobalamin (AdoCbl), by mediating the exchange of the tightly bound damaged cofactor AdoCbl for a free intact one. Reactivation takes place in two steps: ADP-dependent cobalamin release, and ATP-dependent dissociation of the DD apoenzyme-DDR complex. DDR has weak ATPase activity which is required for DD reactivation. Activates glycerol-inactivated, O2-inactivated holoenzyme and inactivated enzyme-cyanocobalamin complex. Also reactivates glycerol-inactivated hologlycerol dehydratase, a DD isozyme. The protein is Diol dehydratase-reactivating factor small subunit of Klebsiella michiganensis (strain ATCC 8724 / DSM 4798 / JCM 20051 / NBRC 3318 / NRRL B-199 / KCTC 1686 / BUCSAV 143 / CCM 1901).